The following is a 471-amino-acid chain: Glutamate--tRNA ligase (471 aa).

Residues proline 9–glycine 19 carry the 'HIGH' region motif. The Zn(2+) site is built by cysteine 98, cysteine 100, cysteine 125, and histidine 127. A 'KMSKS' region motif is present at residues lysine 237–arginine 241. Position 240 (lysine 240) interacts with ATP.

This sequence belongs to the class-I aminoacyl-tRNA synthetase family. Glutamate--tRNA ligase type 1 subfamily. Monomer. It depends on Zn(2+) as a cofactor.

The protein resides in the cytoplasm. The enzyme catalyses tRNA(Glu) + L-glutamate + ATP = L-glutamyl-tRNA(Glu) + AMP + diphosphate. In terms of biological role, catalyzes the attachment of glutamate to tRNA(Glu) in a two-step reaction: glutamate is first activated by ATP to form Glu-AMP and then transferred to the acceptor end of tRNA(Glu). The sequence is that of Glutamate--tRNA ligase from Shigella boydii serotype 18 (strain CDC 3083-94 / BS512).